The primary structure comprises 433 residues: GPI mannosyltransferase 2 (433 aa).

Residue M1 is a topological domain, cytoplasmic. Residues 2–22 (IVGLTLYFVLFRSIQYLLVFL) form a helical membrane-spanning segment. At 23–109 (TPIRQFDTST…NNDSIYHALR (87 aa)) the chain is on the lumenal side. N-linked (GlcNAc...) asparagine glycans are attached at residues N69 and N101. The helical transmembrane segment at 110–130 (VGVAIENVLFYLSGIVLYFLT) threads the bilayer. Over 131-161 (KKIFSQNIRQSQFARTIAKKTSLLFFLTSAA) the chain is Cytoplasmic. A helical transmembrane segment spans residues 162–182 (GFLTSIYSEPLSFFFAFVGIW). The Lumenal portion of the chain corresponds to 183–215 (SRECSISVPVLGQFDISWRYWFPYSFISMACFT). The helical transmembrane segment at 216 to 236 (LASLNRSNCVLLGIYFIFDLI) threads the bilayer. At 237 to 243 (ELTKNRK) the chain is on the cytoplasmic side. Residues 244-264 (FVKAICFPLLSGSLMFSALLY) form a helical membrane-spanning segment. Residues 265–318 (QQYYLPYKTFCPQRGEWCKSQLFSSIFITKTSLYSYIQSHYWGVGLLKYWTPNN) lie on the Lumenal side of the membrane. Residues 319–339 (IPNFLFAVPNIIILIYSSIYF) form a helical membrane-spanning segment. Over 340-350 (SKIYPSYNLKA) the chain is Cytoplasmic. The chain crosses the membrane as a helical span at residues 351-371 (LVWITRALVVIVCFFAHVQIL). The Lumenal segment spans residues 372–409 (NRIASFLPLHLWYLADRLVKTSDPKKMENPKGDDKIVK). Residues 410–430 (FYIYWLAFWIPLQTILFAAFL) traverse the membrane as a helical segment. Residues 431 to 433 (PPA) are Cytoplasmic-facing.

It belongs to the PIGV family. In terms of assembly, part of the GPI mannosyltransferase 2 complex composed of GPI18 and PGA1.

It localises to the endoplasmic reticulum membrane. It participates in glycolipid biosynthesis; glycosylphosphatidylinositol-anchor biosynthesis. Functionally, mannosyltransferase involved in glycosylphosphatidylinositol-anchor biosynthesis. Responsible for the transfer of the second mannose to the glycosylphosphatidylinositol during GPI precursor assembly. This is GPI mannosyltransferase 2 (GPI18) from Saccharomyces cerevisiae (strain ATCC 204508 / S288c) (Baker's yeast).